The primary structure comprises 240 residues: MLIIAGLGNPGSKYAGNRHNIGFLAVDAIHRRHSFSPWSKKFKAAIAEGELGGEKVLLIKPQTYMNLSGEAVGEAMRFYKLQPADLVAIYDELDLPAGKARLKTGGGHGGHNGIKSLDAHCGKEYRRLRLGIGHPGVKEMVQNHVLGDFAKADNAWLEPLLDTLADNADMLVRNEDSQLMNKIALALGGKADEEKPRKDSEKKPAGQSHIRQARNNNQPKLPATGPMADMLKKMFGNKGE.

Position 14 (Tyr-14) interacts with tRNA. The active-site Proton acceptor is His-19. TRNA is bound by residues Tyr-64, Asn-66, and Asn-112. The span at 190–204 (KADEEKPRKDSEKKP) shows a compositional bias: basic and acidic residues. Positions 190–240 (KADEEKPRKDSEKKPAGQSHIRQARNNNQPKLPATGPMADMLKKMFGNKGE) are disordered. Residues 209 to 219 (HIRQARNNNQP) show a composition bias toward polar residues.

Belongs to the PTH family. Monomer.

It is found in the cytoplasm. The enzyme catalyses an N-acyl-L-alpha-aminoacyl-tRNA + H2O = an N-acyl-L-amino acid + a tRNA + H(+). In terms of biological role, hydrolyzes ribosome-free peptidyl-tRNAs (with 1 or more amino acids incorporated), which drop off the ribosome during protein synthesis, or as a result of ribosome stalling. Its function is as follows. Catalyzes the release of premature peptidyl moieties from peptidyl-tRNA molecules trapped in stalled 50S ribosomal subunits, and thus maintains levels of free tRNAs and 50S ribosomes. The polypeptide is Peptidyl-tRNA hydrolase (Rhizobium etli (strain ATCC 51251 / DSM 11541 / JCM 21823 / NBRC 15573 / CFN 42)).